A 187-amino-acid chain; its full sequence is Holliday junction branch migration complex subunit RuvA (187 aa).

The segment at 1 to 64 (MIEYVRGIIE…EDGFQIFGFK (64 aa)) is domain I. A domain II region spans residues 65-136 (TKEELDLFEK…ELKDKLPKEI (72 aa)). The flexible linker stretch occupies residues 136 to 139 (IVFE). The interval 140-187 (GDNNFSNEALEALLALGYTKSEAIYALADITCDSVEDAVKQALKKLMK) is domain III.

Belongs to the RuvA family. Homotetramer. Forms an RuvA(8)-RuvB(12)-Holliday junction (HJ) complex. HJ DNA is sandwiched between 2 RuvA tetramers; dsDNA enters through RuvA and exits via RuvB. An RuvB hexamer assembles on each DNA strand where it exits the tetramer. Each RuvB hexamer is contacted by two RuvA subunits (via domain III) on 2 adjacent RuvB subunits; this complex drives branch migration. In the full resolvosome a probable DNA-RuvA(4)-RuvB(12)-RuvC(2) complex forms which resolves the HJ.

It is found in the cytoplasm. The RuvA-RuvB-RuvC complex processes Holliday junction (HJ) DNA during genetic recombination and DNA repair, while the RuvA-RuvB complex plays an important role in the rescue of blocked DNA replication forks via replication fork reversal (RFR). RuvA specifically binds to HJ cruciform DNA, conferring on it an open structure. The RuvB hexamer acts as an ATP-dependent pump, pulling dsDNA into and through the RuvAB complex. HJ branch migration allows RuvC to scan DNA until it finds its consensus sequence, where it cleaves and resolves the cruciform DNA. The sequence is that of Holliday junction branch migration complex subunit RuvA from Thermoanaerobacter pseudethanolicus (strain ATCC 33223 / 39E) (Clostridium thermohydrosulfuricum).